The primary structure comprises 177 residues: Ubiquitin-conjugating enzyme E2 C (177 aa).

Residues methionine 1 to valine 31 form a disordered region. Positions arginine 14 to serine 30 are enriched in basic and acidic residues. The UBC core domain occupies serine 30–serine 175. Cysteine 114 (glycyl thioester intermediate) is an active-site residue.

It belongs to the ubiquitin-conjugating enzyme family. In terms of assembly, component of the APC/C complex. Autoubiquitinated by the APC/C complex, leading to its degradation by the proteasome.

The catalysed reaction is S-ubiquitinyl-[E1 ubiquitin-activating enzyme]-L-cysteine + [E2 ubiquitin-conjugating enzyme]-L-cysteine = [E1 ubiquitin-activating enzyme]-L-cysteine + S-ubiquitinyl-[E2 ubiquitin-conjugating enzyme]-L-cysteine.. It carries out the reaction S-ubiquitinyl-[E1 ubiquitin-activating enzyme]-L-cysteine + [acceptor protein]-L-lysine = [E1 ubiquitin-activating enzyme]-L-cysteine + N(6)-monoubiquitinyl-[acceptor protein]-L-lysine.. It functions in the pathway protein modification; protein ubiquitination. Functionally, catalyzes the covalent attachment of ubiquitin to other proteins. Acts as an essential factor of the anaphase promoting complex/cyclosome (APC/C), a cell cycle-regulated ubiquitin ligase that is essential for the transition from metaphase to anaphase in mitosis. Involved in both degradation of proteins responsible for maintaining sister chromatid cohesion at the onset of anaphase and of mitotic cyclins A and B at the exit of mitosis. Acts by initiating polyubiquitin chains on APC/C substrates, leading to the degradation of APC/C substrates by the proteasome and promoting mitotic exit. In Spisula solidissima (Atlantic surf-clam), this protein is Ubiquitin-conjugating enzyme E2 C (UBE2C).